A 477-amino-acid chain; its full sequence is Methylenetetrahydrofolate--tRNA-(uracil-5-)-methyltransferase TrmFO (477 aa).

FAD is bound at residue 15–20 (GAGLAG).

Belongs to the MnmG family. TrmFO subfamily. The cofactor is FAD.

The protein resides in the cytoplasm. The catalysed reaction is uridine(54) in tRNA + (6R)-5,10-methylene-5,6,7,8-tetrahydrofolate + NADH + H(+) = 5-methyluridine(54) in tRNA + (6S)-5,6,7,8-tetrahydrofolate + NAD(+). It catalyses the reaction uridine(54) in tRNA + (6R)-5,10-methylene-5,6,7,8-tetrahydrofolate + NADPH + H(+) = 5-methyluridine(54) in tRNA + (6S)-5,6,7,8-tetrahydrofolate + NADP(+). Its function is as follows. Catalyzes the folate-dependent formation of 5-methyl-uridine at position 54 (M-5-U54) in all tRNAs. The protein is Methylenetetrahydrofolate--tRNA-(uracil-5-)-methyltransferase TrmFO of Rhodopseudomonas palustris (strain BisB5).